A 255-amino-acid polypeptide reads, in one-letter code: Type III pantothenate kinase (255 aa).

6–13 (DVGNTNTV) is an ATP binding site. Residues Y100 and 107-110 (GADR) contribute to the substrate site. The Proton acceptor role is filled by D109. A K(+)-binding site is contributed by D129. T132 is an ATP binding site. Residue T184 coordinates substrate.

The protein belongs to the type III pantothenate kinase family. In terms of assembly, homodimer. The cofactor is NH4(+). K(+) serves as cofactor.

Its subcellular location is the cytoplasm. The catalysed reaction is (R)-pantothenate + ATP = (R)-4'-phosphopantothenate + ADP + H(+). It functions in the pathway cofactor biosynthesis; coenzyme A biosynthesis; CoA from (R)-pantothenate: step 1/5. Catalyzes the phosphorylation of pantothenate (Pan), the first step in CoA biosynthesis. The polypeptide is Type III pantothenate kinase (Syntrophomonas wolfei subsp. wolfei (strain DSM 2245B / Goettingen)).